A 303-amino-acid chain; its full sequence is Acetaldehyde dehydrogenase 2 (303 aa).

The active-site Acyl-thioester intermediate is the C130. NAD(+)-binding positions include S161 to N169 and N272.

Belongs to the acetaldehyde dehydrogenase family.

It carries out the reaction acetaldehyde + NAD(+) + CoA = acetyl-CoA + NADH + H(+). The protein is Acetaldehyde dehydrogenase 2 of Burkholderia vietnamiensis (strain G4 / LMG 22486) (Burkholderia cepacia (strain R1808)).